Reading from the N-terminus, the 1388-residue chain is ESX-5 secretion system protein EccC5 (1388 aa).

Transmembrane regions (helical) follow at residues 38 to 58 (WLIV…AMVF) and 65 to 85 (FGGV…MMMF). 3 FtsK domains span residues 477 to 679 (GELL…GAAQ), 855 to 1049 (QPPW…EDAK), and 1158 to 1351 (LQPV…DPDE). Residues 500 to 507 (GTTGSGKS), 873 to 880 (GAGGSGKT), and 1175 to 1182 (GRRECGRT) contribute to the ATP site.

In terms of assembly, part of the ESX-5 / type VII secretion system (T7SS), which is composed of cytosolic and membrane components. The ESX-5 membrane complex is composed of EccB5, EccC5, EccD5 and EccE5.

It is found in the cell inner membrane. Functionally, part of the ESX-5 specialized secretion system, which is responsible for the secretion of EsxN and a number of PE_PGRS and PPE proteins. This component is essential for ESX-5 complex stability and secretion. In Mycobacterium marinum (strain ATCC BAA-535 / M), this protein is ESX-5 secretion system protein EccC5.